Consider the following 277-residue polypeptide: Bifunctional protein FolD (277 aa).

NADP(+) contacts are provided by residues 164 to 166 (GRS), S189, and T230.

Belongs to the tetrahydrofolate dehydrogenase/cyclohydrolase family. In terms of assembly, homodimer.

The enzyme catalyses (6R)-5,10-methylene-5,6,7,8-tetrahydrofolate + NADP(+) = (6R)-5,10-methenyltetrahydrofolate + NADPH. It catalyses the reaction (6R)-5,10-methenyltetrahydrofolate + H2O = (6R)-10-formyltetrahydrofolate + H(+). The protein operates within one-carbon metabolism; tetrahydrofolate interconversion. Functionally, catalyzes the oxidation of 5,10-methylenetetrahydrofolate to 5,10-methenyltetrahydrofolate and then the hydrolysis of 5,10-methenyltetrahydrofolate to 10-formyltetrahydrofolate. This chain is Bifunctional protein FolD, found in Clostridium perfringens (strain ATCC 13124 / DSM 756 / JCM 1290 / NCIMB 6125 / NCTC 8237 / Type A).